We begin with the raw amino-acid sequence, 175 residues long: Inorganic pyrophosphatase (175 aa).

Positions 30, 44, and 56 each coordinate substrate. Mg(2+) contacts are provided by D66, D71, and D103. Y142 is a binding site for substrate.

The protein belongs to the PPase family. In terms of assembly, homohexamer. The cofactor is Mg(2+).

It localises to the cytoplasm. The catalysed reaction is diphosphate + H2O = 2 phosphate + H(+). Functionally, catalyzes the hydrolysis of inorganic pyrophosphate (PPi) forming two phosphate ions. The protein is Inorganic pyrophosphatase of Buchnera aphidicola subsp. Baizongia pistaciae (strain Bp).